Reading from the N-terminus, the 400-residue chain is Argininosuccinate synthase (400 aa).

ATP-binding positions include 10–18 and alanine 38; that span reads AYSGGVDTS. Tyrosine 89 is a binding site for L-citrulline. Glycine 119 provides a ligand contact to ATP. L-aspartate is bound by residues threonine 121, asparagine 125, and aspartate 126. Residue asparagine 125 participates in L-citrulline binding. L-citrulline-binding residues include arginine 129, serine 177, serine 186, glutamate 262, and tyrosine 274.

The protein belongs to the argininosuccinate synthase family. Type 1 subfamily. In terms of assembly, homotetramer.

The protein localises to the cytoplasm. The catalysed reaction is L-citrulline + L-aspartate + ATP = 2-(N(omega)-L-arginino)succinate + AMP + diphosphate + H(+). It functions in the pathway amino-acid biosynthesis; L-arginine biosynthesis; L-arginine from L-ornithine and carbamoyl phosphate: step 2/3. With respect to regulation, activity decreases to 53.9% and 18.4% in the presence of 1 mM and 5 mM arginine, respectively. Activity also decreases to 80.1%, 78.1% and 92.1% in the presence of 5 mM ornithine, lysine and succinate, respectively. Activity does not decrease in the presence of glutamate, glutamine or asparagine. In terms of biological role, catalyzes the condensation of citrulline and aspartate into argininosuccinate, the immediate precursor of arginine. SyArgG is the rate-limiting step in arginine biosynthesis in Synechocystis PCC 6803. This is Argininosuccinate synthase from Synechocystis sp. (strain ATCC 27184 / PCC 6803 / Kazusa).